Reading from the N-terminus, the 559-residue chain is Proton-coupled zinc antiporter SLC30A9, mitochondrial (559 aa).

The disordered stretch occupies residues 58 to 96; it reads SSDQKEDGGSKGTSAASSPEKSMAGLDPSKPEQKSTFPP. 5 helical membrane passes run 230 to 250, 305 to 325, 333 to 353, 389 to 409, and 415 to 435; these read VVIVAICINGLNFFFKLLAWV, GVGIFMMGAGLSWYHGIIGLL, LLWAYCILAGSLVSEGATLLV, AAAVLGLVMAASCMGLTSLTG, and SLGSLGVGTLLGAVSAFLIYT. The LXXLL motif signature appears at 453–457; that stretch reads LTELL.

This sequence belongs to the cation diffusion facilitator (CDF) transporter (TC 2.A.4) family. SLC30A subfamily.

It localises to the mitochondrion membrane. It is found in the nucleus. Its subcellular location is the endoplasmic reticulum. The enzyme catalyses Zn(2+)(in) + 2 H(+)(out) = Zn(2+)(out) + 2 H(+)(in). Functionally, mitochondrial proton-coupled zinc ion antiporter mediating the export of zinc from the mitochondria and involved in zinc homeostasis, zinc mobilization as well as mitochondrial morphology and health. In nucleus, may function as a secondary coactivator for nuclear receptors. The chain is Proton-coupled zinc antiporter SLC30A9, mitochondrial (slc30a9) from Xenopus laevis (African clawed frog).